The following is a 76-amino-acid chain: Bowman-Birk type proteinase inhibitor DE-3 (76 aa).

Disulfide bonds link cysteine 16/cysteine 70, cysteine 17/cysteine 32, cysteine 20/cysteine 66, cysteine 22/cysteine 30, cysteine 40/cysteine 47, cysteine 44/cysteine 59, and cysteine 49/cysteine 57.

Belongs to the Bowman-Birk serine protease inhibitor family.

This Macrotyloma axillare (Perennial horse gram) protein is Bowman-Birk type proteinase inhibitor DE-3.